Consider the following 460-residue polypeptide: Serine incorporator 5 (460 aa).

Topologically, residues 1-36 are extracellular; the sequence is MSARCCAGQLACCCGSAGCALCCGCCPKFRQSRSTR. The chain crosses the membrane as a helical span at residues 37–57; it reads FMYLFYFTLVIIPCCVMMSPS. Topologically, residues 58–89 are cytoplasmic; sequence VMKQMTEHIPFFEDFCKGIKAGDTCENLVGYS. A helical membrane pass occupies residues 90-110; that stretch reads AVYRVCFGMACFFFVFCVLTF. The Extracellular segment spans residues 111–124; sequence KVNNSKSCRASIHN. The N-linked (GlcNAc...) asparagine glycan is linked to asparagine 113. Residues 125–145 form a helical membrane-spanning segment; it reads GFWFFKLLLLGAMCSGAFFIP. The Cytoplasmic segment spans residues 146–156; sequence DQETFLNVWRY. Residues 157 to 177 traverse the membrane as a helical segment; that stretch reads VGAVGSFFFICIQLLLIVEFA. Over 178 to 197 the chain is Extracellular; it reads HKWNKNWTAGTVRNKLWYAS. The N-linked (GlcNAc...) asparagine glycan is linked to asparagine 183. The chain crosses the membrane as a helical span at residues 198-218; sequence LSLALIMYSIAVGGLALMAVF. Residues 219-229 lie on the Cytoplasmic side of the membrane; that stretch reads YTQWDDCMDNK. Residues 230 to 250 form a helical membrane-spanning segment; sequence ILLGVHGGLCVLISLAAISPC. Residues 251–258 are Extracellular-facing; that stretch reads VQNRQPHS. A helical membrane pass occupies residues 259-279; sequence GLLQPGLISCYVTYLTFSALT. Residues 280–309 are Cytoplasmic-facing; it reads SKPEKVVKDEHGKNVTICVPDFGQDFRRDE. The chain crosses the membrane as a helical span at residues 310–330; that stretch reads SMVTWLGTLLLVVCISYSCLT. Residues 331–390 are Extracellular-facing; that stretch reads STTRSSSDALQRRYGAPELEVARCCFCFGPDGEDTEEQQNVKEGPRVIYDEKKGTVYSYS. The chain crosses the membrane as a helical span at residues 391-411; it reads YFHFVLLLASLYVMMTLTSWF. The Cytoplasmic portion of the chain corresponds to 412 to 427; that stretch reads HYENATIETFFVGSWS. A helical transmembrane segment spans residues 428–448; the sequence is IFWVKMASCWMCVLLYLWTLV. Residues 449–460 are Extracellular-facing; it reads APLCCPSRQFSV.

This sequence belongs to the TDE1 family. In terms of tissue distribution, brain. Expressed at high levels in the white matter and the oligodendroglial cells of the brain. Expressed at low levels in the liver.

The protein localises to the cell membrane. The enzyme catalyses a 1,2-diacyl-sn-glycero-3-phospho-L-serine(in) = a 1,2-diacyl-sn-glycero-3-phospho-L-serine(out). The catalysed reaction is a 1,2-diacyl-sn-glycero-3-phosphocholine(in) = a 1,2-diacyl-sn-glycero-3-phosphocholine(out). It carries out the reaction a 1,2-diacyl-sn-glycero-3-phosphoethanolamine(in) = a 1,2-diacyl-sn-glycero-3-phosphoethanolamine(out). Restriction factor required to restrict infectivity of gammaretroviruses: acts by inhibiting an early step of viral infection. Impairs the penetration of the viral particle into the cytoplasm. Non-ATP-dependent, non-specific lipid transporter for phosphatidylserine, phosphatidylcholine, and phosphatidylethanolamine. Functions as a scramblase that flips lipids in both directions across the membrane. Phospholipid scrambling results in gammaretroviral surface exposure of phosphatidylserine and loss of membrane asymmetry, which leads to loss of infectivity. Enhances the incorporation of serine into phosphatidylserine and sphingolipids. May play a role in providing serine molecules for the formation of myelin glycosphingolipids in oligodendrocytes. The sequence is that of Serine incorporator 5 (Serinc5) from Rattus norvegicus (Rat).